The following is a 301-amino-acid chain: MESQEFLYVNRETGAVEKEPVCCSFAIKFFLETRLGRGVYSFLCKNSLFSRIVGRFQRLRMTRRFIRPFVEKYRICEDEALRPLCDFTSFNDFFIRKLKPEARPICGGSEICVTPADGAYLVFPSIKDVSLFSVKNQLFSLNSLLEDQQLASEYAEGSMAIARLAPFDYHRFHFPVEGIAGTPRLINGYLFSVHPLMLKRNLKVFAENKREITVIESKEFGKVVYIEIGALNVGSIHQTFAPGSYVGKGAEKGFFAFGGSTVVLLFEPQRIIFDADLVHHSAQGLETRCRMGQSLGKRFSS.

Catalysis depends on charge relay system; for autoendoproteolytic cleavage activity residues Asp117, His173, and Ser260. Ser260 acts as the Schiff-base intermediate with substrate; via pyruvic acid; for decarboxylase activity in catalysis. Residue Ser260 is modified to Pyruvic acid (Ser); by autocatalysis.

This sequence belongs to the phosphatidylserine decarboxylase family. PSD-B subfamily. Prokaryotic type II sub-subfamily. In terms of assembly, heterodimer of a large membrane-associated beta subunit and a small pyruvoyl-containing alpha subunit. Pyruvate is required as a cofactor. Post-translationally, is synthesized initially as an inactive proenzyme. Formation of the active enzyme involves a self-maturation process in which the active site pyruvoyl group is generated from an internal serine residue via an autocatalytic post-translational modification. Two non-identical subunits are generated from the proenzyme in this reaction, and the pyruvate is formed at the N-terminus of the alpha chain, which is derived from the carboxyl end of the proenzyme. The autoendoproteolytic cleavage occurs by a canonical serine protease mechanism, in which the side chain hydroxyl group of the serine supplies its oxygen atom to form the C-terminus of the beta chain, while the remainder of the serine residue undergoes an oxidative deamination to produce ammonia and the pyruvoyl prosthetic group on the alpha chain. During this reaction, the Ser that is part of the protease active site of the proenzyme becomes the pyruvoyl prosthetic group, which constitutes an essential element of the active site of the mature decarboxylase.

It localises to the cell membrane. It carries out the reaction a 1,2-diacyl-sn-glycero-3-phospho-L-serine + H(+) = a 1,2-diacyl-sn-glycero-3-phosphoethanolamine + CO2. Its pathway is phospholipid metabolism; phosphatidylethanolamine biosynthesis; phosphatidylethanolamine from CDP-diacylglycerol: step 2/2. In terms of biological role, catalyzes the formation of phosphatidylethanolamine (PtdEtn) from phosphatidylserine (PtdSer). The polypeptide is Phosphatidylserine decarboxylase proenzyme (Chlamydia muridarum (strain MoPn / Nigg)).